The following is a 484-amino-acid chain: Sialidase-4 (484 aa).

The FRIP motif signature appears at 22-25 (YRVP). Substrate contacts are provided by R23 and R43. Residues D47 and D48 each act as proton acceptor in the active site. The BNR 1 repeat unit spans residues 127–138 (VASRDAGLSWGS). Substrate is bound by residues Y177 and Y179. The BNR 2 repeat unit spans residues 200-211 (FYSDDHGRTWRC). Substrate contacts are provided by E222 and R242. The BNR 3 repeat unit spans residues 251–262 (ALSTDEGTSFLP). Residues 284 to 357 (PAPAPNRPRD…GPRPGVSGDV (74 aa)) are disordered. Positions 336–345 (RLQPRGDGPR) are enriched in low complexity. R389 contributes to the substrate binding site. The Nucleophile role is filled by Y419. E440 is a catalytic residue.

This sequence belongs to the glycosyl hydrolase 33 family. N-glycosylated. Predominant form in liver. Also expressed in brain, kidney and colon. In terms of tissue distribution, highly expressed in brain and at lower levels in kidney and liver.

The protein resides in the cell membrane. It is found in the endoplasmic reticulum membrane. It localises to the microsome membrane. The protein localises to the mitochondrion membrane. Its subcellular location is the cell projection. The protein resides in the neuron projection. It is found in the mitochondrion inner membrane. It localises to the mitochondrion outer membrane. The protein localises to the lysosome lumen. The enzyme catalyses Hydrolysis of alpha-(2-&gt;3)-, alpha-(2-&gt;6)-, alpha-(2-&gt;8)- glycosidic linkages of terminal sialic acid residues in oligosaccharides, glycoproteins, glycolipids, colominic acid and synthetic substrates.. It carries out the reaction a ganglioside GM3 + H2O = a beta-D-galactosyl-(1-&gt;4)-beta-D-glucosyl-(1&lt;-&gt;1)-ceramide + N-acetylneuraminate. The catalysed reaction is a ganglioside GM3 (d18:1(4E)) + H2O = a beta-D-Gal-(1-&gt;4)-beta-D-Glc-(1&lt;-&gt;1)-Cer(d18:1(4E)) + N-acetylneuraminate. It catalyses the reaction a ganglioside GM2 + H2O = a ganglioside GA2 + N-acetylneuraminate. The enzyme catalyses a ganglioside GM2 (d18:1(4E)) + H2O = a ganglioside GA2 (d18:1(4E)) + N-acetylneuraminate. It carries out the reaction a ganglioside GD1a + H2O = a ganglioside GM1 + N-acetylneuraminate. The catalysed reaction is a ganglioside GD1a (d18:1(4E)) + H2O = a ganglioside GM1 (d18:1(4E)) + N-acetylneuraminate. It catalyses the reaction a ganglioside GD3 + H2O = a ganglioside GM3 + N-acetylneuraminate. The enzyme catalyses a ganglioside GD3 (d18:1(4E)) + H2O = a ganglioside GM3 (d18:1(4E)) + N-acetylneuraminate. In terms of biological role, exo-alpha-sialidase that catalyzes the hydrolytic cleavage of the terminal sialic acid (N-acetylneuraminic acid, Neu5Ac) of a glycan moiety in the catabolism of glycolipids, glycoproteins and oligosacharides. Efficiently hydrolyzes gangliosides including alpha-(2-&gt;3)-sialylated GD1a and GM3 and alpha-(2-&gt;8)-sialylated GD3. Hydrolyzes poly-alpha-(2-&gt;8)-sialylated neural cell adhesion molecule NCAM1 likely at growth cones, suppressing neurite outgrowth in hippocampal neurons. May desialylate sialyl Lewis A and X antigens at the cell surface, down-regulating these glycan epitopes recognized by SELE/E selectin in the initiation of cell adhesion and extravasation. Has sialidase activity toward mucin, fetuin and sialyllactose. The polypeptide is Sialidase-4 (NEU4) (Homo sapiens (Human)).